Consider the following 307-residue polypeptide: Ribosomal protein uL3 glutamine methyltransferase (307 aa).

The protein belongs to the protein N5-glutamine methyltransferase family. PrmB subfamily.

It carries out the reaction L-glutaminyl-[ribosomal protein uL3] + S-adenosyl-L-methionine = N(5)-methyl-L-glutaminyl-[ribosomal protein uL3] + S-adenosyl-L-homocysteine + H(+). Functionally, methylates large ribosomal subunit protein uL3 on a specific glutamine residue. The protein is Ribosomal protein uL3 glutamine methyltransferase of Burkholderia pseudomallei (strain K96243).